The sequence spans 160 residues: Cyclic pyranopterin monophosphate synthase (160 aa).

Substrate is bound by residues 75-77 (MCH) and 116-117 (ME). The active site involves Asp-131.

It belongs to the MoaC family. In terms of assembly, homohexamer; trimer of dimers.

It catalyses the reaction (8S)-3',8-cyclo-7,8-dihydroguanosine 5'-triphosphate = cyclic pyranopterin phosphate + diphosphate. It functions in the pathway cofactor biosynthesis; molybdopterin biosynthesis. In terms of biological role, catalyzes the conversion of (8S)-3',8-cyclo-7,8-dihydroguanosine 5'-triphosphate to cyclic pyranopterin monophosphate (cPMP). This chain is Cyclic pyranopterin monophosphate synthase, found in Staphylococcus haemolyticus (strain JCSC1435).